The following is a 347-amino-acid chain: Fructose-1,6-bisphosphatase class 1 (347 aa).

Mg(2+) contacts are provided by E107, D128, L130, and D131. Substrate is bound by residues 131-134 (DGSS), N224, Y257, and K286. Residue E292 participates in Mg(2+) binding.

It belongs to the FBPase class 1 family. As to quaternary structure, homotetramer. Mg(2+) is required as a cofactor.

Its subcellular location is the cytoplasm. It catalyses the reaction beta-D-fructose 1,6-bisphosphate + H2O = beta-D-fructose 6-phosphate + phosphate. It participates in carbohydrate biosynthesis; gluconeogenesis. In Sorangium cellulosum (strain So ce56) (Polyangium cellulosum (strain So ce56)), this protein is Fructose-1,6-bisphosphatase class 1.